Here is a 486-residue protein sequence, read N- to C-terminus: MENKKLTAANGRPIADNQNSQTAGPRGPIMLQDPWLIEKLAHFDREVIPERRMHAKGSGAYGTFTVTHDITKYTRAAIFSQVGKQTECFVRFSTVAGERGAADAERDIRGFAMKFYTEEGNWDLVGNNTPVFFLRDPLKFPDLNHAVKRDPRNNMRSANNNWDFWTLLPEALHQVTITMSPRGIPASYRHMHGFGSHTYSFLNAENKRIWVKFHLKTMQGIKNLTDQEAEAIIAKDRESHQRDLYESIERGDFPKWKFQIQLMTEEEADNYRINPFDLTKVWPHKDFPLQDVGILELNRNPENYFAEVEQSAFNPMNIVEGIGFSPDKMLQGRLFSYGDAQRYRLGVNSEQIPVNKPRCPFHAFHRDGAMRVDGNYGSAKGYEPNSYGEWQDSPEKKEPPLKVHGDVFNYNEREYDDDYYSQPGDLFRLMPADEQQLLFENTARAMGDAELFIKQRHVRNCYKADPAYGTGVAQALGIDLEEALKE.

The tract at residues 1–28 (MENKKLTAANGRPIADNQNSQTAGPRGP) is disordered. Active-site residues include H54 and N127. Position 337 (Y337) interacts with heme.

This sequence belongs to the catalase family. In terms of assembly, homodimer. Requires heme as cofactor.

It carries out the reaction 2 H2O2 = O2 + 2 H2O. In terms of biological role, decomposes hydrogen peroxide into water and oxygen; serves to protect cells from the toxic effects of hydrogen peroxide. May be involved in aerotolerance of B.fragilis. This Bacteroides fragilis (strain YCH46) protein is Catalase (katA).